An 80-amino-acid polypeptide reads, in one-letter code: Cytochrome c oxidase subunit 7A1, mitochondrial (80 aa).

A mitochondrion-targeting transit peptide spans 1–21 (MRALRVSQALVRSFSSSTRSH). At 22 to 46 (LENRVAEKQKLFQADNDLPVHLKGG) the chain is on the mitochondrial matrix side. A helical membrane pass occupies residues 47–75 (GMDNVLYRLTMTLTLGGTAYCLYCLGWAS). At 76-80 (FPHKK) the chain is on the mitochondrial intermembrane side.

Belongs to the cytochrome c oxidase VIIa family. Component of the complex IV (CIV, cytochrome c oxidase), a multisubunit enzyme composed of 14 subunits. The complex is composed of a catalytic core of 3 subunits MT-CO1, MT-CO2 and MT-CO3, encoded in the mitochondrial DNA, and 11 supernumerary subunits COX4I, COX5A, COX5B, COX6A, COX6B, COX6C, COX7A, COX7B, COX7C, COX8 and NDUFA4, which are encoded in the nuclear genome. The complex exists as a monomer or a dimer and forms supercomplexes (SCs) in the inner mitochondrial membrane with NADH-ubiquinone oxidoreductase (complex I, CI) and ubiquinol-cytochrome c oxidoreductase (cytochrome b-c1 complex, complex III, CIII), resulting in different assemblies (supercomplex SCI(1)III(2)IV(1) and megacomplex MCI(2)III(2)IV(2)).

Its subcellular location is the mitochondrion inner membrane. Its pathway is energy metabolism; oxidative phosphorylation. Functionally, component of the mitochondrial respiratory complex IV (CIV, also named cytochrome c oxidase complex), the last enzyme in the mitochondrial electron transport chain which drives oxidative phosphorylation. The CIV complex is the component of the respiratory chain that catalyzes the reduction of oxygen to water. Acts as an assembly factor that specifically drives the homodimerization of CIV complexes, mediating the formation of mitochondrial respiratory supercomplexes (respirasomes) containing two CIV: supercomplxes with two molecules of CIV show improved activity. Despite being highly expressed in brown adipose tissue, not required for thermogenesis. This Mus musculus (Mouse) protein is Cytochrome c oxidase subunit 7A1, mitochondrial.